A 182-amino-acid chain; its full sequence is Ribosome-recycling factor (182 aa).

A disordered region spans residues 136 to 160; it reads VKKSEKDGDLSEDQSRDEQEKIQKE.

The protein belongs to the RRF family.

The protein localises to the cytoplasm. Its function is as follows. Responsible for the release of ribosomes from messenger RNA at the termination of protein biosynthesis. May increase the efficiency of translation by recycling ribosomes from one round of translation to another. The sequence is that of Ribosome-recycling factor from Prochlorococcus marinus (strain NATL1A).